A 444-amino-acid polypeptide reads, in one-letter code: Zinc protease PqqE (444 aa).

The first 28 residues, 1–28 (MKHFSVKRLLGLSSVLLVTLGASMHAQS), serve as a signal peptide directing secretion. His-78 serves as a coordination point for Zn(2+). The active-site Proton acceptor is the Glu-81. Positions 82 and 158 each coordinate Zn(2+).

The protein belongs to the peptidase M16 family. It depends on Zn(2+) as a cofactor.

It localises to the secreted. Can function alone, but full activity requires the presence of the non-peptidase homolog YmxG. Functionally, virulence factor that cleaves the cytoplasmic domain of the human junctional adhesion molecule A (JAM-A), compromising gastric epithelial barrier function and cell-cell adhesion. Cleavage of JAM-A occurs after Ala-285 or, to a lesser extent, before Ala-285. This chain is Zinc protease PqqE, found in Helicobacter pylori (strain ATCC 700392 / 26695) (Campylobacter pylori).